A 235-amino-acid polypeptide reads, in one-letter code: MEKKEMMYEGKAKKVYSTEDPEKVVIYYKDDATAFNGEKKGQIEDKGVLNNNITSMLFELLEKHGVKTHFEKKLSDREQLCKKVEIVPLEVIVRNVAAGSMAKRLGLEEGYELKTTVFELSYKDDALGDPLINDTHAVAIGATTFEELDKIYAATKTVNDVLKEFFHKQGIKLIDFKIEFGRYNGEVLLADEISPDTCRLWDEKTNEKLDKDRFRRDMGNVKEAYVEILNRITGK.

The protein belongs to the SAICAR synthetase family.

The catalysed reaction is 5-amino-1-(5-phospho-D-ribosyl)imidazole-4-carboxylate + L-aspartate + ATP = (2S)-2-[5-amino-1-(5-phospho-beta-D-ribosyl)imidazole-4-carboxamido]succinate + ADP + phosphate + 2 H(+). Its pathway is purine metabolism; IMP biosynthesis via de novo pathway; 5-amino-1-(5-phospho-D-ribosyl)imidazole-4-carboxamide from 5-amino-1-(5-phospho-D-ribosyl)imidazole-4-carboxylate: step 1/2. The polypeptide is Phosphoribosylaminoimidazole-succinocarboxamide synthase (Clostridium acetobutylicum (strain ATCC 824 / DSM 792 / JCM 1419 / IAM 19013 / LMG 5710 / NBRC 13948 / NRRL B-527 / VKM B-1787 / 2291 / W)).